Consider the following 117-residue polypeptide: Hemerythrin subunit alpha (117 aa).

The Fe cation site is built by His24, His53, Glu57, His72, His76, His105, and Asp110.

This sequence belongs to the hemerythrin family. As to quaternary structure, octamer composed of two types of chains: alpha and beta.

Its function is as follows. Hemerythrin is a respiratory protein in blood cells of certain marine worms. The oxygen-binding site in each chain contains two iron atoms. The protein is Hemerythrin subunit alpha of Lingula reevii (Inarticulated brachiopod).